Here is a 208-residue protein sequence, read N- to C-terminus: uncharacterized protein (208 aa).

Disordered stretches follow at residues Pro91–Asp115, Gln127–Gly156, and Asn182–Lys208. The span at Gln127–Pro136 shows a compositional bias: polar residues.

This is an uncharacterized protein from Rattus norvegicus (Rat).